A 97-amino-acid polypeptide reads, in one-letter code: Antiholin (97 aa).

The first 24 residues, 1–24 (MALKATALFAMLGLSFVLSPSIEA), serve as a signal peptide directing secretion. A disulfide bridge links cysteine 69 with cysteine 75.

Belongs to the T4likevirus antiholin family. In terms of assembly, homotetramer; in free-form. Homomultimer. Heterotetramer composed of 2 holin and 2 antiholin. The holin-antiholin complex binds dsDNA. Interacts (via C-terminus) with holin (via C-terminus); this interaction blocks the holin homomultimerization and delays the host cell lysis. Disulfide bond is required for functionality.

It localises to the host periplasm. In terms of biological role, involved in lysis inhibition. Senses superinfections and inhibits the holin, thereby delaying the host cell lysis timing. The genomic DNA from the superinfecting phage bound to the complex holin-antiholin probably serves as a signal for the lysis inhibition and blocks the holin multimerization. The polypeptide is Antiholin (rI) (Enterobacteria phage T4 (Bacteriophage T4)).